Reading from the N-terminus, the 384-residue chain is Dual-specificity RNA methyltransferase RlmN (384 aa).

Glu105 acts as the Proton acceptor in catalysis. The Radical SAM core domain maps to Glu111 to Asp350. A disulfide bond links Cys118 and Cys355. [4Fe-4S] cluster-binding residues include Cys125, Cys129, and Cys132. Residues Gly179–Glu180, Ser211, Ser233–His235, and Asn312 each bind S-adenosyl-L-methionine. Catalysis depends on Cys355, which acts as the S-methylcysteine intermediate.

This sequence belongs to the radical SAM superfamily. RlmN family. Requires [4Fe-4S] cluster as cofactor.

The protein localises to the cytoplasm. It catalyses the reaction adenosine(2503) in 23S rRNA + 2 reduced [2Fe-2S]-[ferredoxin] + 2 S-adenosyl-L-methionine = 2-methyladenosine(2503) in 23S rRNA + 5'-deoxyadenosine + L-methionine + 2 oxidized [2Fe-2S]-[ferredoxin] + S-adenosyl-L-homocysteine. The catalysed reaction is adenosine(37) in tRNA + 2 reduced [2Fe-2S]-[ferredoxin] + 2 S-adenosyl-L-methionine = 2-methyladenosine(37) in tRNA + 5'-deoxyadenosine + L-methionine + 2 oxidized [2Fe-2S]-[ferredoxin] + S-adenosyl-L-homocysteine. Specifically methylates position 2 of adenine 2503 in 23S rRNA and position 2 of adenine 37 in tRNAs. m2A2503 modification seems to play a crucial role in the proofreading step occurring at the peptidyl transferase center and thus would serve to optimize ribosomal fidelity. The protein is Dual-specificity RNA methyltransferase RlmN of Escherichia coli O9:H4 (strain HS).